The chain runs to 458 residues: UDP-N-acetylglucosamine 1-carboxyvinyltransferase (458 aa).

Residue 34 to 35 (KN) coordinates phosphoenolpyruvate. UDP-N-acetyl-alpha-D-glucosamine is bound at residue arginine 104. Cysteine 128 acts as the Proton donor in catalysis. Residue cysteine 128 is modified to 2-(S-cysteinyl)pyruvic acid O-phosphothioketal. UDP-N-acetyl-alpha-D-glucosamine is bound by residues aspartate 320 and valine 342.

It belongs to the EPSP synthase family. MurA subfamily.

The protein localises to the cytoplasm. The enzyme catalyses phosphoenolpyruvate + UDP-N-acetyl-alpha-D-glucosamine = UDP-N-acetyl-3-O-(1-carboxyvinyl)-alpha-D-glucosamine + phosphate. Its pathway is cell wall biogenesis; peptidoglycan biosynthesis. Functionally, cell wall formation. Adds enolpyruvyl to UDP-N-acetylglucosamine. This Prochlorococcus marinus (strain NATL2A) protein is UDP-N-acetylglucosamine 1-carboxyvinyltransferase.